We begin with the raw amino-acid sequence, 1337 residues long: Phosphoribosylformylglycinamidine synthase (1337 aa).

Ser-215 is modified (phosphoserine). Residues Gly-322–Asp-333 and Ala-402–Phe-404 contribute to the ATP site. Phosphothreonine occurs at positions 619 and 622. Ala-705 lines the ATP pocket. Residues Asp-706, Glu-745, Asn-749, and Asp-908 each coordinate Mg(2+). Residue Ser-910 participates in ATP binding. The Glutamine amidotransferase type-1 domain maps to Arg-1063–Val-1301. Cys-1157 functions as the Nucleophile in the catalytic mechanism. Catalysis depends on residues His-1296 and Glu-1298.

In the N-terminal section; belongs to the FGAMS family.

The protein localises to the cytoplasm. The catalysed reaction is N(2)-formyl-N(1)-(5-phospho-beta-D-ribosyl)glycinamide + L-glutamine + ATP + H2O = 2-formamido-N(1)-(5-O-phospho-beta-D-ribosyl)acetamidine + L-glutamate + ADP + phosphate + H(+). It participates in purine metabolism; IMP biosynthesis via de novo pathway; 5-amino-1-(5-phospho-D-ribosyl)imidazole from N(2)-formyl-N(1)-(5-phospho-D-ribosyl)glycinamide: step 1/2. Phosphoribosylformylglycinamidine synthase involved in the purines biosynthetic pathway. Catalyzes the ATP-dependent conversion of formylglycinamide ribonucleotide (FGAR) and glutamine to yield formylglycinamidine ribonucleotide (FGAM) and glutamate. The sequence is that of Phosphoribosylformylglycinamidine synthase (Pfas) from Mus musculus (Mouse).